The sequence spans 412 residues: Tyrosine--tRNA ligase (412 aa).

A 'HIGH' region motif is present at residues 56–65 (PSAPDVHIGH). Positions 240–244 (KMSKS) match the 'KMSKS' region motif. Residue K243 coordinates ATP. The S4 RNA-binding domain maps to 351-412 (VWIVDLLVTL…GKRKFKKLVR (62 aa)).

Belongs to the class-I aminoacyl-tRNA synthetase family. TyrS type 2 subfamily. Homodimer.

The protein localises to the cytoplasm. The enzyme catalyses tRNA(Tyr) + L-tyrosine + ATP = L-tyrosyl-tRNA(Tyr) + AMP + diphosphate + H(+). In terms of biological role, catalyzes the attachment of tyrosine to tRNA(Tyr) in a two-step reaction: tyrosine is first activated by ATP to form Tyr-AMP and then transferred to the acceptor end of tRNA(Tyr). This chain is Tyrosine--tRNA ligase, found in Halalkalibacterium halodurans (strain ATCC BAA-125 / DSM 18197 / FERM 7344 / JCM 9153 / C-125) (Bacillus halodurans).